We begin with the raw amino-acid sequence, 386 residues long: MVTPKQIDFSSCGGGDNSDDTLSHRESPRNPSSKRAAASFAAEAGEETMKKKKKKKKKNLGPPLIVRIWNEEDELSILKGLVDYRAKTGFNPKIDWDAFYSFLGSSIVAKFSKEQVLSKIRKLKRRFHVHWEKISEGNDPKFTRSSDSEAFGFSSMIWGQGEFGNDDGMDKEMVKEHDVNGNGAAENGTARIAQENESGEEMLKEHEETLNENGAEEIRDNDETARKAQQLESESEEEMLKEHEEPFNENGAENIRDNNGTTQIAQQSESESEEMLKEHEEVANTELVNENGAAKTTENGTTGGKERHDDDDDDELCAVQDAFEAVMSQGLSGYQKKLQLEKLMNLGTGKRRELSDEWKALCVEERRLNIKKLRFSAKLAEAANDS.

2 disordered regions span residues 1–58 (MVTP…KKKK) and 197–314 (ESGE…DDDD). Over residues 216 to 226 (EEIRDNDETAR) the composition is skewed to basic and acidic residues. Residues 221–285 (NDETARKAQQ…LKEHEEVANT (65 aa)) adopt a coiled-coil conformation. A compositionally biased stretch (polar residues) spans 257 to 267 (DNNGTTQIAQQ). Residues 291–300 (NGAAKTTENG) are compositionally biased toward low complexity. The non-canonical leucine-zipper stretch occupies residues 354–375 (LSDEWKALCVEERRLNIKKLRF).

This sequence belongs to the GeBP family. As to quaternary structure, homo- and heterodimers. Interacts with GEBP, GPL2 and GPL3. Interacts with GEBP. In terms of tissue distribution, expressed in the apical meristem and young leaf primordia. Detected in the vascular tissues of cotyledons and leaves, in hydathodes and at the base of flowers and siliques, but not in roots.

It localises to the nucleus. Its function is as follows. Probable transcription factor. May play redundant roles with GEBP and GPL2 in cytokinin responses by regulating the transcript levels of type-A ARR response genes. Involved in stress responses. Plays a repressive role in cell expansion by counteracting the positive role of CPR5 in this process, but does not regulate cell proliferation or endoreduplication. This is GLABROUS1 enhancer-binding protein-like 1 from Arabidopsis thaliana (Mouse-ear cress).